Here is a 235-residue protein sequence, read N- to C-terminus: Protein CIST1 (235 aa).

The first 31 residues, 1–31 (MASSQPPLPPPPPPLLLLALLLLLKVSDTSS), serve as a signal peptide directing secretion. Low complexity-rich tracts occupy residues 28-61 (DTSS…SSPT) and 76-110 (STSH…SQPE). The interval 28-159 (DTSSSVSTAT…TGPPSVSLAT (132 aa)) is disordered. Residues 32–184 (SVSTATSTAS…GVPRLHRNPG (153 aa)) lie on the Extracellular side of the membrane. An N-linked (GlcNAc...) asparagine glycan is attached at N45. Residues 114–136 (HPSSGSPSSEHTVTSPSLGSVSL) show a composition bias toward polar residues. A helical membrane pass occupies residues 185–205 (VVVAVCLLVSALLIGGAIMAV). The Cytoplasmic segment spans residues 206–235 (RRCHNGVSEFQKLDEGLVSRRSSSAHHTLP).

Highly expressed in large intestine, small intestine, rumen, and kidney tissues.

It is found in the membrane. This Bos taurus (Bovine) protein is Protein CIST1 (CIST1).